A 345-amino-acid polypeptide reads, in one-letter code: Type II restriction enzyme HgiCI (345 aa).

It catalyses the reaction Endonucleolytic cleavage of DNA to give specific double-stranded fragments with terminal 5'-phosphates.. Its function is as follows. A P subtype restriction enzyme that recognizes the double-stranded sequence 5'-GGYRCC-3' and cleaves after G-1. The sequence is that of Type II restriction enzyme HgiCI (hgiCIR) from Herpetosiphon aurantiacus (Herpetosiphon giganteus).